We begin with the raw amino-acid sequence, 166 residues long: Podoplanin (166 aa).

The signal sequence occupies residues Met1–Gly22. Residues Gly23 to Leu135 are Extracellular-facing. Residues Thr34, Thr52, Thr55, and Thr56 are each glycosylated (O-linked (GalNAc...) threonine). Over residues Asp54–Thr63 the composition is skewed to basic and acidic residues. The segment at Asp54 to Thr124 is disordered. Ser62 carries O-linked (GalNAc...) serine glycosylation. O-linked (GalNAc...) threonine glycosylation is found at Thr63, Thr71, and Thr80. The O-linked (GalNAc...) serine glycan is linked to Ser81. Residue Thr83 is glycosylated (O-linked (GalNAc...) threonine). O-linked (GalNAc...) serine glycosylation occurs at Ser84. The segment covering Ser84 to Ser93 has biased composition (basic and acidic residues). 7 O-linked (GalNAc...) threonine glycosylation sites follow: Thr94, Thr95, Thr96, Thr101, Thr105, Thr109, and Thr110. Polar residues predominate over residues Thr94–His103. The segment covering Ser104–Arg114 has biased composition (basic and acidic residues). The chain crosses the membrane as a helical span at residues Val136–Val156. Residues Gly137 to Gly141 are requires for dimerization and lipid rafts association. Topologically, residues Met157–Pro166 are cytoplasmic. The tract at residues Arg158–Lys159 is requires for interaction with MSN and EZR.

Belongs to the podoplanin family. Homodimer. Interacts with CLEC1B; the interaction is independent of CLEC1B glycosylation and activates CLEC1B; the interaction is dependent of sialic acid on O-glycans. Interacts with CD9; this interaction is homophilic and attenuates platelet aggregation and pulmonary metastasis induced by PDPN. Interacts with LGALS8; the interaction is glycosylation-dependent; may participate in connection of the lymphatic endothelium to the surrounding extracellular matrix. Interacts with HSPA9. Interacts (via extracellular domain) with CD44; this interaction is required for PDPN-mediated directional migration and regulation of lamellipodia extension/stabilization during cell spreading and migration. Interacts (via cytoplasmic domain) with MSN and EZR; activates RHOA and promotes epithelial-mesenchymal transition. Interacts with CCL21; relocalized PDPN to the basolateral membrane. In terms of processing, extensively O-glycosylated. Contains sialic acid residues. O-glycosylation is necessary for platelet aggregation activity. Disialylated at Thr-52; sialic acid is critical for platelet-aggregating activity and for CLEC1B interaction. The N-terminus is blocked. In adult kidney, expressed on the urinary surface and foot processes of podocytes and in parietal epithelial cells of Bowman's capsule where it is localized to luminal surfaces. In lung, expressed exclusively on luminal surfaces of type I alveolar epithelial cells and pleural mesothelial cells. Not expressed in type II alveolar cells. In bone, expressed in osteocytes and osteoblasts. In spleen, liver, stomach and intestine, expressed in mesoepithelium. Also expressed in thymic epithelial cells, choroid plexus and leptomeninges.

Its subcellular location is the membrane. The protein localises to the cell projection. It localises to the lamellipodium membrane. The protein resides in the filopodium membrane. It is found in the microvillus membrane. Its subcellular location is the ruffle membrane. The protein localises to the membrane raft. It localises to the apical cell membrane. The protein resides in the basolateral cell membrane. It is found in the invadopodium. In terms of biological role, mediates effects on cell migration and adhesion through its different partners. During development plays a role in blood and lymphatic vessels separation by binding CLEC1B, triggering CLEC1B activation in platelets and leading to platelet activation and/or aggregation. Interaction with CD9, on the contrary, attenuates platelet aggregation and pulmonary metastasis induced by PDPN. Mediates effects on cell migration and adhesion through its different partners. Through MSN or EZR interaction promotes epithelial-mesenchymal transition (EMT) leading to ERZ phosphorylation and triggering RHOA activation leading to cell migration increase and invasiveness. Interaction with CD44 promotes directional cell migration in epithelial and tumor cells. In lymph nodes (LNs), controls fibroblastic reticular cells (FRCs) adhesion to the extracellular matrix (ECM) and contraction of the actomyosin by maintaining ERM proteins (EZR; MSN and RDX) and MYL9 activation through association with unknown transmembrane proteins. Engagement of CLEC1B by PDPN promotes FRCs relaxation by blocking lateral membrane interactions leading to reduction of ERM proteins (EZR; MSN and RDX) and MYL9 activation. Through binding with LGALS8 may participate in connection of the lymphatic endothelium to the surrounding extracellular matrix. In keratinocytes, induces changes in cell morphology showing an elongated shape, numerous membrane protrusions, major reorganization of the actin cytoskeleton, increased motility and decreased cell adhesion. Controls invadopodia stability and maturation leading to efficient degradation of the extracellular matrix (ECM) in tumor cells through modulation of RHOC activity in order to activate ROCK1/ROCK2 and LIMK1/LIMK2 and inactivation of CFL1. Required for normal lung cell proliferation and alveolus formation at birth. Does not function as a water channel or as a regulator of aquaporin-type water channels. Does not have any effect on folic acid or amino acid transport. In Rattus norvegicus (Rat), this protein is Podoplanin.